Reading from the N-terminus, the 119-residue chain is Large ribosomal subunit protein bL20 (119 aa).

Belongs to the bacterial ribosomal protein bL20 family.

Functionally, binds directly to 23S ribosomal RNA and is necessary for the in vitro assembly process of the 50S ribosomal subunit. It is not involved in the protein synthesizing functions of that subunit. The chain is Large ribosomal subunit protein bL20 from Albidiferax ferrireducens (strain ATCC BAA-621 / DSM 15236 / T118) (Rhodoferax ferrireducens).